A 125-amino-acid polypeptide reads, in one-letter code: Small ribosomal subunit protein eS6 (125 aa).

Residues 90–109 (KGPGFRPKEKGERRKKTVRG) form a disordered region.

This sequence belongs to the eukaryotic ribosomal protein eS6 family. Part of the 30S ribosomal subunit.

The sequence is that of Small ribosomal subunit protein eS6 from Pyrococcus furiosus (strain ATCC 43587 / DSM 3638 / JCM 8422 / Vc1).